Consider the following 110-residue polypeptide: Large ribosomal subunit protein uL22 (110 aa).

The protein belongs to the universal ribosomal protein uL22 family. Part of the 50S ribosomal subunit.

Functionally, this protein binds specifically to 23S rRNA; its binding is stimulated by other ribosomal proteins, e.g. L4, L17, and L20. It is important during the early stages of 50S assembly. It makes multiple contacts with different domains of the 23S rRNA in the assembled 50S subunit and ribosome. In terms of biological role, the globular domain of the protein is located near the polypeptide exit tunnel on the outside of the subunit, while an extended beta-hairpin is found that lines the wall of the exit tunnel in the center of the 70S ribosome. This Photobacterium profundum (strain SS9) protein is Large ribosomal subunit protein uL22.